A 404-amino-acid polypeptide reads, in one-letter code: L-cysteine:1D-myo-inositol 2-amino-2-deoxy-alpha-D-glucopyranoside ligase (404 aa).

C47 lines the Zn(2+) pocket. Residues 47–50, T62, and 85–87 contribute to the L-cysteinyl-5'-AMP site; these read CGIT and NIT. The 'HIGH' region signature appears at 49–59; sequence ITPYDSTHLGH. The short motif at 188-193 is the 'ERGGDP' region element; it reads ERGGDP. W228 provides a ligand contact to L-cysteinyl-5'-AMP. Residue C232 participates in Zn(2+) binding. Residue 250 to 252 participates in L-cysteinyl-5'-AMP binding; the sequence is GSD. H257 provides a ligand contact to Zn(2+). Residue I284 coordinates L-cysteinyl-5'-AMP. The 'KMSKS' region signature appears at 290–294; that stretch reads KMSKS.

It belongs to the class-I aminoacyl-tRNA synthetase family. MshC subfamily. As to quaternary structure, monomer. Zn(2+) serves as cofactor.

It catalyses the reaction 1D-myo-inositol 2-amino-2-deoxy-alpha-D-glucopyranoside + L-cysteine + ATP = 1D-myo-inositol 2-(L-cysteinylamino)-2-deoxy-alpha-D-glucopyranoside + AMP + diphosphate + H(+). Its function is as follows. Catalyzes the ATP-dependent condensation of GlcN-Ins and L-cysteine to form L-Cys-GlcN-Ins. The protein is L-cysteine:1D-myo-inositol 2-amino-2-deoxy-alpha-D-glucopyranoside ligase of Corynebacterium striatum.